The primary structure comprises 409 residues: Elongation factor Tu (409 aa).

The region spanning 10–214 (KPHVNVGTIG…AVDSYIPTPE (205 aa)) is the tr-type G domain. A G1 region spans residues 19–26 (GHVDHGKT). Residue 19-26 (GHVDHGKT) participates in GTP binding. Residue threonine 26 participates in Mg(2+) binding. The G2 stretch occupies residues 60-64 (GITIN). Positions 81–84 (DCPG) are G3. GTP-binding positions include 81-85 (DCPGH) and 136-139 (NKAD). The tract at residues 136–139 (NKAD) is G4. Residues 174–176 (SAL) form a G5 region.

This sequence belongs to the TRAFAC class translation factor GTPase superfamily. Classic translation factor GTPase family. EF-Tu/EF-1A subfamily. As to quaternary structure, monomer.

The protein localises to the cytoplasm. The catalysed reaction is GTP + H2O = GDP + phosphate + H(+). GTP hydrolase that promotes the GTP-dependent binding of aminoacyl-tRNA to the A-site of ribosomes during protein biosynthesis. The protein is Elongation factor Tu of Synechococcus sp. (strain JA-2-3B'a(2-13)) (Cyanobacteria bacterium Yellowstone B-Prime).